A 109-amino-acid chain; its full sequence is Iron-sulfur cluster assembly protein CyaY (109 aa).

This sequence belongs to the frataxin family.

Functionally, involved in iron-sulfur (Fe-S) cluster assembly. May act as a regulator of Fe-S biogenesis. This Albidiferax ferrireducens (strain ATCC BAA-621 / DSM 15236 / T118) (Rhodoferax ferrireducens) protein is Iron-sulfur cluster assembly protein CyaY.